The primary structure comprises 292 residues: Phosphatidylserine decarboxylase proenzyme (292 aa).

Catalysis depends on charge relay system; for autoendoproteolytic cleavage activity residues D92, H149, and S256. S256 acts as the Schiff-base intermediate with substrate; via pyruvic acid; for decarboxylase activity in catalysis. At S256 the chain carries Pyruvic acid (Ser); by autocatalysis.

It belongs to the phosphatidylserine decarboxylase family. PSD-B subfamily. Prokaryotic type I sub-subfamily. Heterodimer of a large membrane-associated beta subunit and a small pyruvoyl-containing alpha subunit. Requires pyruvate as cofactor. Is synthesized initially as an inactive proenzyme. Formation of the active enzyme involves a self-maturation process in which the active site pyruvoyl group is generated from an internal serine residue via an autocatalytic post-translational modification. Two non-identical subunits are generated from the proenzyme in this reaction, and the pyruvate is formed at the N-terminus of the alpha chain, which is derived from the carboxyl end of the proenzyme. The autoendoproteolytic cleavage occurs by a canonical serine protease mechanism, in which the side chain hydroxyl group of the serine supplies its oxygen atom to form the C-terminus of the beta chain, while the remainder of the serine residue undergoes an oxidative deamination to produce ammonia and the pyruvoyl prosthetic group on the alpha chain. During this reaction, the Ser that is part of the protease active site of the proenzyme becomes the pyruvoyl prosthetic group, which constitutes an essential element of the active site of the mature decarboxylase.

It is found in the cell membrane. It carries out the reaction a 1,2-diacyl-sn-glycero-3-phospho-L-serine + H(+) = a 1,2-diacyl-sn-glycero-3-phosphoethanolamine + CO2. The protein operates within phospholipid metabolism; phosphatidylethanolamine biosynthesis; phosphatidylethanolamine from CDP-diacylglycerol: step 2/2. In terms of biological role, catalyzes the formation of phosphatidylethanolamine (PtdEtn) from phosphatidylserine (PtdSer). In Baumannia cicadellinicola subsp. Homalodisca coagulata, this protein is Phosphatidylserine decarboxylase proenzyme.